The sequence spans 363 residues: Anhydro-N-acetylmuramic acid kinase (363 aa).

10–17 (GTSLDGLD) contacts ATP.

The protein belongs to the anhydro-N-acetylmuramic acid kinase family.

It carries out the reaction 1,6-anhydro-N-acetyl-beta-muramate + ATP + H2O = N-acetyl-D-muramate 6-phosphate + ADP + H(+). It participates in amino-sugar metabolism; 1,6-anhydro-N-acetylmuramate degradation. Its pathway is cell wall biogenesis; peptidoglycan recycling. Catalyzes the specific phosphorylation of 1,6-anhydro-N-acetylmuramic acid (anhMurNAc) with the simultaneous cleavage of the 1,6-anhydro ring, generating MurNAc-6-P. Is required for the utilization of anhMurNAc either imported from the medium or derived from its own cell wall murein, and thus plays a role in cell wall recycling. In Pseudomonas fluorescens (strain Pf0-1), this protein is Anhydro-N-acetylmuramic acid kinase.